Reading from the N-terminus, the 108-residue chain is Protein YcgL (108 aa).

The 85-residue stretch at 12-96 (MFCVIYRSSK…SPEDLLKQHL (85 aa)) folds into the YcgL domain.

This chain is Protein YcgL, found in Shigella dysenteriae serotype 1 (strain Sd197).